The chain runs to 444 residues: Enolase 1 (444 aa).

2 residues coordinate substrate: His165 and Glu174. Glu217 acts as the Proton donor in catalysis. Substrate contacts are provided by Glu303 and Asp330. Catalysis depends on Lys355, which acts as the Proton acceptor. Residues 382-385 (SHRS) and Lys406 contribute to the substrate site.

This sequence belongs to the enolase family. In terms of assembly, homodimer. Requires Mg(2+) as cofactor.

It is found in the cytoplasm. The catalysed reaction is (2R)-2-phosphoglycerate = phosphoenolpyruvate + H2O. It functions in the pathway carbohydrate degradation; glycolysis; pyruvate from D-glyceraldehyde 3-phosphate: step 4/5. The chain is Enolase 1 (ENO1) from Toxoplasma gondii.